Consider the following 203-residue polypeptide: uncharacterized protein (203 aa).

A helical membrane pass occupies residues 89-109; that stretch reads CEIPFAACSVLSWSLPTIAAL.

It localises to the membrane. This is an uncharacterized protein from Saccharomyces cerevisiae (strain ATCC 204508 / S288c) (Baker's yeast).